An 887-amino-acid chain; its full sequence is Pre-mRNA-splicing factor cwf22 (887 aa).

The disordered stretch occupies residues 1-27; it reads MEKEDKSFGIGMLDYNRENPESSGHSR. The 184-residue stretch at 124–307 folds into the MIF4G domain; sequence KKSINGLINK…EVLFQTRKDK (184 aa). The tract at residues 366-401 is disordered; that stretch reads ILGEEDDDENEEDEEDSEETSESEEDESVNDEKPQV. Residues 368-394 are compositionally biased toward acidic residues; the sequence is GEEDDDENEEDEEDSEETSESEEDESV. The MI domain maps to 411–527; that stretch reads NLRKSIYLTI…GWEVYDCVRL (117 aa). 2 disordered regions span residues 607 to 834 and 867 to 887; these read MPKS…KTYH and GELY…PRAD. The span at 618-662 shows a compositional bias: low complexity; that stretch reads EGYSSGSETGSTYSSSYSSTYSRGRSYSRSTRSYSKSRSYSRSRS. S662 carries the post-translational modification Phosphoserine. T664 carries the phosphothreonine modification. Basic and acidic residues predominate over residues 677–690; sequence KDRELSPRGRERSS. The segment covering 691 to 712 has biased composition (low complexity); the sequence is NRNSYSDLSRSSSLSRGRSRSY. Residues 717 to 726 are compositionally biased toward basic and acidic residues; sequence RLIESEDKGY. Over residues 736 to 746 the composition is skewed to basic residues; sequence RKYRSRQRYRR. Low complexity-rich tracts occupy residues 747 to 762 and 769 to 791; these read SYAG…SRSP and SMSC…SRSP. A compositionally biased stretch (polar residues) spans 799-809; that stretch reads DSLSYNRQYSP.

It belongs to the CWC22 family. As to quaternary structure, belongs to the 40S cdc5-associated complex (or cwf complex), a spliceosome sub-complex reminiscent of a late-stage spliceosome composed of the U2, U5 and U6 snRNAs and at least brr2, cdc5, cwf2/prp3, cwf3/syf1, cwf4/syf3, cwf5/ecm2, spp42/cwf6, cwf7/spf27, cwf8, cwf9, cwf10, cwf11, cwf12, prp45/cwf13, cwf14, cwf15, cwf16, cwf17, cwf18, cwf19, cwf20, cwf21, cwf22, cwf23, cwf24, cwf25, cwf26, cyp7/cwf27, cwf28, cwf29/ist3, lea1, msl1, prp5/cwf1, prp10, prp12/sap130, prp17, prp22, sap61, sap62, sap114, sap145, slu7, smb1, smd1, smd3, smf1, smg1 and syf2.

The protein localises to the cytoplasm. It is found in the nucleus. Functionally, may be involved in pre-mRNA splicing. The chain is Pre-mRNA-splicing factor cwf22 (cwf22) from Schizosaccharomyces pombe (strain 972 / ATCC 24843) (Fission yeast).